Consider the following 1060-residue polypeptide: Isoleucine--tRNA ligase (1060 aa).

Positions 55–65 (PTANGTPGVHH) match the 'HIGH' region motif. The 'KMSKS' region motif lies at 608-612 (KMSKH). Position 611 (Lys-611) interacts with ATP.

It belongs to the class-I aminoacyl-tRNA synthetase family. IleS type 2 subfamily. As to quaternary structure, monomer. Zn(2+) serves as cofactor.

Its subcellular location is the cytoplasm. It catalyses the reaction tRNA(Ile) + L-isoleucine + ATP = L-isoleucyl-tRNA(Ile) + AMP + diphosphate. In terms of biological role, catalyzes the attachment of isoleucine to tRNA(Ile). As IleRS can inadvertently accommodate and process structurally similar amino acids such as valine, to avoid such errors it has two additional distinct tRNA(Ile)-dependent editing activities. One activity is designated as 'pretransfer' editing and involves the hydrolysis of activated Val-AMP. The other activity is designated 'posttransfer' editing and involves deacylation of mischarged Val-tRNA(Ile). In Thermobifida fusca (strain YX), this protein is Isoleucine--tRNA ligase.